The chain runs to 380 residues: Probable protein phosphatase 2C 2 (380 aa).

Residues Gly122–Leu376 form the PPM-type phosphatase domain. Mn(2+)-binding residues include Asp158, Gly159, Asp321, and Asp367.

It belongs to the PP2C family. Requires Mg(2+) as cofactor. The cofactor is Mn(2+).

It carries out the reaction O-phospho-L-seryl-[protein] + H2O = L-seryl-[protein] + phosphate. The enzyme catalyses O-phospho-L-threonyl-[protein] + H2O = L-threonyl-[protein] + phosphate. This chain is Probable protein phosphatase 2C 2, found in Arabidopsis thaliana (Mouse-ear cress).